Reading from the N-terminus, the 475-residue chain is Aspartyl/glutamyl-tRNA(Asn/Gln) amidotransferase subunit B (475 aa).

It belongs to the GatB/GatE family. GatB subfamily. In terms of assembly, heterotrimer of A, B and C subunits.

The catalysed reaction is L-glutamyl-tRNA(Gln) + L-glutamine + ATP + H2O = L-glutaminyl-tRNA(Gln) + L-glutamate + ADP + phosphate + H(+). The enzyme catalyses L-aspartyl-tRNA(Asn) + L-glutamine + ATP + H2O = L-asparaginyl-tRNA(Asn) + L-glutamate + ADP + phosphate + 2 H(+). Functionally, allows the formation of correctly charged Asn-tRNA(Asn) or Gln-tRNA(Gln) through the transamidation of misacylated Asp-tRNA(Asn) or Glu-tRNA(Gln) in organisms which lack either or both of asparaginyl-tRNA or glutaminyl-tRNA synthetases. The reaction takes place in the presence of glutamine and ATP through an activated phospho-Asp-tRNA(Asn) or phospho-Glu-tRNA(Gln). This chain is Aspartyl/glutamyl-tRNA(Asn/Gln) amidotransferase subunit B, found in Staphylococcus epidermidis (strain ATCC 12228 / FDA PCI 1200).